A 171-amino-acid chain; its full sequence is HTH-type transcriptional regulator AldR (171 aa).

Over residues 1–14 (MSEGSSITGVQTPG) the composition is skewed to polar residues. The tract at residues 1–21 (MSEGSSITGVQTPGSPKDVRA) is disordered. The 62-residue stretch at 24 to 85 (LDDIDRRILL…DIDPAAVGLG (62 aa)) folds into the HTH asnC-type domain. A DNA-binding region (H-T-H motif) is located at residues 43–62 (NSALAEMVGIAPSTCHGRVR).

As to quaternary structure, homodimer in the absence of L-alanine. Homooctamer in the presence of L-alanine. Homotetramers in the presence of L-cysteine.

Its activity is regulated as follows. In the presence of alanine, AldR changes its quaternary structure from a homodimer to an octamer with an open-ring conformation. The binding affinity of AldR for the ald control region is increased significantly by L-alanine. In vitro, L-cysteine also increases the binding affinity of AldR for the target DNA. Functionally, transcriptional regulator that might play a role under hypoxic conditions. Regulates the expression of ald, which encodes L-alanine dehydrogenase. Serves as both an activator for ald expression in the presence of L-alanine and a repressor in the absence of L-alanine. Acts by binding directly to the upstream region of the ald gene. Four AldR-binding sites (O2, O1, O4 and O3) were identified upstream of the ald gene. O2, O1 and O4 are required for the induction of ald expression by alanine, while O3 is directly involved in the repression of ald expression, by occluding the access of RNA polymerase to the ald promoter. In addition to O3, both O1 and O4 are also necessary for full repression of ald expression in the absence of alanine. The sequence is that of HTH-type transcriptional regulator AldR from Mycolicibacterium smegmatis (strain ATCC 700084 / mc(2)155) (Mycobacterium smegmatis).